A 348-amino-acid chain; its full sequence is Mediator of RNA polymerase II transcription subunit 18 (348 aa).

Basic and acidic residues predominate over residues 152–218 (MDVDLEHKDK…KNDEVKHSEV (67 aa)). Positions 152–227 (MDVDLEHKDK…VNLEDGAETG (76 aa)) are disordered. A coiled-coil region spans residues 167 to 223 (DTKEKEEDKKEEDKKEEDKKEEDKKEEDKKEEDKKEEEKVEKKNDEVKHSEVNLEDG).

The protein belongs to the Mediator complex subunit 18 family. Component of the Mediator complex.

The protein localises to the nucleus. In terms of biological role, component of the Mediator complex, a coactivator involved in the regulated transcription of nearly all RNA polymerase II-dependent genes. Mediator functions as a bridge to convey information from gene-specific regulatory proteins to the basal RNA polymerase II transcription machinery. Mediator is recruited to promoters by direct interactions with regulatory proteins and serves as a scaffold for the assembly of a functional preinitiation complex with RNA polymerase II and the general transcription factors. This Scheffersomyces stipitis (strain ATCC 58785 / CBS 6054 / NBRC 10063 / NRRL Y-11545) (Yeast) protein is Mediator of RNA polymerase II transcription subunit 18 (SRB5).